The following is a 3916-amino-acid chain: Fusarin C synthetase (3916 aa).

One can recognise a Ketosynthase family 3 (KS3) domain in the interval 9–440 (KEPIAIIGTS…GTNVHAIIEQ (432 aa)). Catalysis depends on for beta-ketoacyl synthase activity residues C182, H319, and H360. A malonyl-CoA:ACP transacylase (MAT) domain region spans residues 548–866 (VFTGQGAQWP…QGTVARNIHD (319 aa)). Residues 935-1068 (HPLLGARSVE…GQLRVEFGCS (134 aa)) form an N-terminal hotdog fold region. A dehydratase (DH) domain region spans residues 935–1228 (HPLLGARSVE…GLTCTSLLRP (294 aa)). One can recognise a PKS/mFAS DH domain in the interval 935 to 1231 (HPLLGARSVE…CTSLLRPGPS (297 aa)). The active-site Proton acceptor; for dehydratase activity is H967. A C-terminal hotdog fold region spans residues 1084 to 1231 (LTSVNMERFY…CTSLLRPGPS (148 aa)). D1141 serves as the catalytic Proton donor; for dehydratase activity. Positions 1347 to 1575 (IQAVGENLPS…VNDFVDAEKY (229 aa)) are C-methyltransferase (CMeT) domain. The ketoreductase (KR) domain 1 stretch occupies residues 2092 to 2266 (TYLLIGCTGG…AASVMHIGMV (175 aa)). The Carrier 1 domain maps to 2372 to 2449 (EILAVVEEEF…ELCSTVVSHL (78 aa)). S2409 bears the O-(pantetheine 4'-phosphoryl)serine mark. A disordered region spans residues 2487 to 2510 (NEPFTIRNSPNSTQVTSEAGVDED). Over residues 2492 to 2503 (IRNSPNSTQVTS) the composition is skewed to polar residues. A condensation region spans residues 2522–2806 (PLSFAQERLW…VNLLPLRLKI (285 aa)). An adenylation region spans residues 2975–3385 (EFVVKQPDDT…RIAGDSQIKL (411 aa)). In terms of domain architecture, Carrier 2 spans 3493–3570 (KPLTETQERL…EMAAKIDGST (78 aa)). The residue at position 3530 (S3530) is an O-(pantetheine 4'-phosphoryl)serine. The interval 3612-3833 (LTGATGFLGV…DFVPVDVVAA (222 aa)) is thiolester reductase (R) domain.

In the C-terminal section; belongs to the NRP synthetase family.

The protein operates within mycotoxin biosynthesis. In terms of biological role, fusarin C synthetase; part of the gene cluster that mediates the biosynthesis of the mycotoxin fusarin C. Within the cluster, FUS1, FUS2, FUS8 and FUS9 are sufficient for fusarin production. The roles of the other FUS members are yet undetermined. The fusarin C synthetase FUS1 is responsible for the condensation of one acetyl-coenzyme A (CoA) unit with six malonyl-CoA units and the amide linkage of the arising heptaketide and homoserine, subsequently releasing the first intermediate, prefusarin, as an alcohol with an open ring structure. The cytochrome P450 monooxygenase FUS8 participates in multiple oxidation processes at carbon C-20 and is able to use the FUS1 product as substrate, resulting in formation of 20-hydroxy-prefusarin. This reaction seems to be essential before the 2-pyrrolidone ring closure can be catalyzed by FUS2, generating 20-hydroxy-fusarin. FUS8 is able to further oxidizes carbon C-20 after ring closure, resulting in the formation of carboxy-fusarin C. As the last step, FUS9 methylates the hydroxyl group at C-21 to generate fusarin C. Fusarin C can then rearrange to epi-fusarin C, the (z)-isomers, and fusarin A and fusarin D. This Gibberella fujikuroi (strain CBS 195.34 / IMI 58289 / NRRL A-6831) (Bakanae and foot rot disease fungus) protein is Fusarin C synthetase.